We begin with the raw amino-acid sequence, 1639 residues long: Merozoite surface protein 1 (1639 aa).

Residues 1–19 (MKIIFFLCSFLFFIINTQC) form the signal peptide. Composition is skewed to polar residues over residues 58 to 67 (SGTAVTTSTP) and 107 to 119 (NSRR…NSSD). Disordered stretches follow at residues 58-78 (SGTA…SGGS) and 94-122 (VASG…DSDA). N-linked (GlcNAc...) asparagine glycans are attached at residues N116 and N268. The interval 689–764 (KKNIKTEGQS…VPTPPAPVNN (76 aa)) is disordered. Composition is skewed to polar residues over residues 694–704 (TEGQSDNSEPS) and 711–722 (GQATTKPGQQAG). Low complexity predominate over residues 730–741 (VQAQAQEQKQAQ). Residues N764, N768, N783, and N844 are each glycosylated (N-linked (GlcNAc...) asparagine). Positions 893–915 (SMQPLSLTPQDKPEVSANDDTSH) are disordered. N-linked (GlcNAc...) asparagine glycosylation is found at N920, N964, N1058, N1165, and N1174. The segment at 1002 to 1116 (QLSFDLYNKY…EESIQTEDNY (115 aa)) is required for binding to host erythrocyte cell membrane. The span at 1199–1212 (VSESGSDTLEQSQP) shows a compositional bias: polar residues. Positions 1199 to 1229 (VSESGSDTLEQSQPKKPASTHVGAESNTITT) are disordered. Residues N1445 and N1526 are each glycosylated (N-linked (GlcNAc...) asparagine). EGF-like domains lie at 1530-1570 (HQCV…VENP) and 1571-1618 (NPTC…IFCS). Cystine bridges form between C1532–C1543, C1537–C1553, C1555–C1566, C1574–C1587, C1581–C1601, and C1603–C1617. S1618 is lipidated: GPI-anchor amidated serine. The propeptide at 1619–1639 (SSNFLGISFLLILMLILYSFI) is removed in mature form.

In terms of assembly, forms a complex composed of subunits p83, p30, p38, and p42 which remain non-covalently associated; the complex is formed at the merozoite surface prior to egress from host erythrocytes. Forms a complex composed of processed MSP1 subunits, MSP6 subunit p36 and MSP7; the complex is formed at the merozoite surface prior to egress from host erythrocytes. Within the complex, interacts (via subunit p38) with MSP6 subunit p36 and (via subunits p83, p30 and p38) with MSP7 (via subunit p22). Forms a complex composed of MSP1, MSP6, DBLMSP1 and DBLMSP2. Within the complex, interacts (via subunit p38) with DBLMSP1 and DBLMSP2. Forms a complex composed of MSP1, and rhoptry proteins RhopH3, RAP1 and CLAG9/RhopH3. Within the complex, interacts (via subunits p42 and p19) with RhopH3 (via C-terminus). Forms a complex composed of MSP1, MSP6, MSP7, MSP9 and MSP3; within the complex, MSP6 and MSP9 mediate the binding to the host erythrocyte. Interacts (via subunits p19 and p42) with MSP9; the interaction is direct; MSP1 subunits p19 or p42, and MSP9 form a co-ligand complex that interacts with host SLC4A1/Band 3 protein. May interact with PFD6. Interacts with host spectrin. Interacts with host glycophorin GYPA in a sialic acid-independent manner. As to quaternary structure, interacts with host proinflammatory cytokine S100P; the interaction blocks S100P inflammatory and chemotactic activities. In terms of assembly, interacts with host SLC4A1/Band 3 (via 5ABC region) on the host erythrocyte surface in a sialic acid-independent manner. Post-translationally, the p190 precursor is cleaved by SUB1 prior to merozoite egress into 4 subunits p83, p30, p38, and p42 which remain non-covalently associated. SUB1-mediated proteolytic cleavage occurs in an orderly manner; the first cleavage occurs at the p83/p30 site, followed by cleavage at the p30/p38 site, the last cleavage occurs at the p38/p42 site. The order of cleavage is essential for parasite viability. SUB1-mediated processing is essential for merozoite egress. In a second processing step during erythrocyte invasion, p42 is cleaved by SUB2 into p33 and p19; the latter remains attached to the merozoite surface via its GPI-anchor and stays on the surface during the subsequent ring stage.

Its subcellular location is the cell membrane. The protein resides in the secreted. It is found in the vacuole membrane. During the asexual blood stage, involved in merozoite egress from host erythrocytes possibly via its interaction with the host cytoskeleton protein spectrin resulting in the destabilization of the host cytoskeleton and thus leading to erythrocyte cell membrane rupture. Involved in the binding to host erythrocytes and is required for host erythrocyte invasion. Functionally, by binding to host proinflammatory cytokine S100P may interfere with host immune responses. In terms of biological role, involved in merozoite invasion of host erythrocytes. May play a role in the biogenesis and/or function of the food vacuole during the intraerythrocytic development. In Plasmodium falciparum (isolate Wellcome), this protein is Merozoite surface protein 1.